A 461-amino-acid chain; its full sequence is E3 ubiquitin-protein ligase TRIM15 (461 aa).

Residues 12–57 (CSDCQGRLEDAVTAACGHTFCRLCLPLPPQMGAQPSSRVLLCPVCQ) form an RING-type zinc finger. The B box-type zinc-finger motif lies at 74-115 (LGETYCEEHGEKIYFFCENDAEFLCVFCREGPSHQAHAVGFL). Positions 79, 82, 101, and 107 each coordinate Zn(2+). The stretch at 123 to 230 (RDRLRGRLEA…EKCQQPASEL (108 aa)) forms a coiled coil. In terms of domain architecture, B30.2/SPRY spans 272–461 (EMLRAFSENL…KKGSCLTLKG (190 aa)).

The protein belongs to the TRIM/RBCC family. In terms of assembly, interacts with paxillin/PXN; this interaction recruits TRIM15 to focal adhesions. Interacts with TRIM8; this interaction prevents TRIM8 cytoplasmic translocation.

The protein resides in the cytoplasm. It localises to the nucleus. Its subcellular location is the cell junction. The protein localises to the focal adhesion. It catalyses the reaction S-ubiquitinyl-[E2 ubiquitin-conjugating enzyme]-L-cysteine + [acceptor protein]-L-lysine = [E2 ubiquitin-conjugating enzyme]-L-cysteine + N(6)-ubiquitinyl-[acceptor protein]-L-lysine.. Its function is as follows. E3 ubiquitin ligase that plays a role in several processes including innate antiviral immnity, cell migration and chemotaxis. Acts as a 'Lys-63'-specific ubiquitin ligase for MAPK1/ERK2 and MAPK3/ERK1, promoting their activation by facilitating their interaction with MAP2K1 and MAP2K2. Also plays a role in cell migration and chemotaxis by acting as a stable focal adhesion component upon recruitment by multi-adapter protein paxillin/PXN. Functions in the RIGI-mediated interferon induction pathway upstream or at the level of MAVS. Inhibits NF-kappa-B activation by turnover of 'Lys-63'-linked ubiquitination of MAP3K7/TAK1. Mechanistically, prevents TRIM8 cytoplasmic translocation and thus inhibits TRIM8-mediated 'Lys-63'-linked polyubiquitination of MAP3K7/TAK1 in the cytoplasm. Also has an important regulatory effect on the activation of hepatic stellate cells (HSCs). The polypeptide is E3 ubiquitin-protein ligase TRIM15 (TRIM15) (Sus scrofa (Pig)).